Reading from the N-terminus, the 213-residue chain is Thymidylate kinase (213 aa).

Glycine 10–threonine 17 contacts ATP.

Belongs to the thymidylate kinase family.

The catalysed reaction is dTMP + ATP = dTDP + ADP. Its function is as follows. Phosphorylation of dTMP to form dTDP in both de novo and salvage pathways of dTTP synthesis. This Escherichia coli O6:H1 (strain CFT073 / ATCC 700928 / UPEC) protein is Thymidylate kinase.